The primary structure comprises 333 residues: Taste receptor type 2 member 123 (333 aa).

Residues 1–14 are Extracellular-facing; that stretch reads MFSQKTNYSHLFTF. The chain crosses the membrane as a helical span at residues 15–37; the sequence is SIIFYVEIVTGILGNGFIALVNI. At 38–57 the chain is on the cytoplasmic side; it reads MDWLKRRRISTADQILTALA. The helical transmembrane segment at 58–77 threads the bilayer; sequence LTRLIYVWSVLICILLLFLC. The Extracellular segment spans residues 78 to 91; sequence PHLSMRPEMFTAIG. A helical membrane pass occupies residues 92–114; that stretch reads VIWVVDNHFSIWLATCLGVFYFL. Residues 115-133 are Cytoplasmic-facing; the sequence is KIASFSNSLFLYLKWRVKK. Residues 134 to 156 traverse the membrane as a helical segment; that stretch reads VVLMIILISLIFLMLNISSLGMY. The Extracellular segment spans residues 157–204; it reads DHFSIDVYEGNMSYNLVDSTHFPRIFLFTNSSKVFLIANSSHVFLPIN. 3 N-linked (GlcNAc...) asparagine glycosylation sites follow: N167, N186, and N195. Residues 205–227 traverse the membrane as a helical segment; it reads SLFMLIPFTVSLVAFFVLFLSLW. Residues 228–250 lie on the Cytoplasmic side of the membrane; that stretch reads KHHKKMQVNAKGPRDASTMAHTK. Residues 251–273 form a helical membrane-spanning segment; sequence ALQIGFSFLLLYAIYLLFIITGI. Residues 274 to 282 are Extracellular-facing; it reads LNLDLMRCI. A helical membrane pass occupies residues 283 to 305; it reads VILLFDHISGAVFSISHSFVLIL. Residues 306 to 333 lie on the Cytoplasmic side of the membrane; sequence GNSKLRQATLSVLPCLRCRSKDMDTVVF.

Belongs to the G-protein coupled receptor T2R family. As to expression, expressed in subsets of taste receptor cells of the tongue and palate epithelium and exclusively in gustducin-positive cells. Expressed in the antrum and fundus (part of the stomach), duodenum and in gastric endocrine cells.

The protein localises to the membrane. Functionally, gustducin-coupled receptor implicated in the perception of bitter compounds in the oral cavity and the gastrointestinal tract. Signals through PLCB2 and the calcium-regulated cation channel TRPM5. The protein is Taste receptor type 2 member 123 (Tas2r123) of Rattus norvegicus (Rat).